A 339-amino-acid polypeptide reads, in one-letter code: DNA-directed RNA polymerase subunit alpha (339 aa).

The segment at 1–235 is alpha N-terminal domain (alpha-NTD); it reads MTIQKNWQEL…DQLNVFVNFE (235 aa). The tract at residues 251 to 339 is alpha C-terminal domain (alpha-CTD); it reads FNPAFLKKVD…ELAKRFEDHY (89 aa).

The protein belongs to the RNA polymerase alpha chain family. In terms of assembly, homodimer. The RNAP catalytic core consists of 2 alpha, 1 beta, 1 beta' and 1 omega subunit. When a sigma factor is associated with the core the holoenzyme is formed, which can initiate transcription.

It catalyses the reaction RNA(n) + a ribonucleoside 5'-triphosphate = RNA(n+1) + diphosphate. DNA-dependent RNA polymerase catalyzes the transcription of DNA into RNA using the four ribonucleoside triphosphates as substrates. This Rhodopseudomonas palustris (strain BisA53) protein is DNA-directed RNA polymerase subunit alpha.